The primary structure comprises 359 residues: Photosystem II protein D1 1 (359 aa).

Helical transmembrane passes span 29-46 (YVGW…AATT), 118-133 (HFLI…EWEL), and 142-156 (WICV…AASA). H118 is a binding site for chlorophyll a. Y126 contacts pheophytin a. [CaMn4O5] cluster-binding residues include D170 and E189. Residues 197 to 218 (FHMMGVAGVFGGSLFSAMHGSL) traverse the membrane as a helical segment. Position 198 (H198) interacts with chlorophyll a. A quinone contacts are provided by residues H215 and 264 to 265 (SF). Position 215 (H215) interacts with Fe cation. H272 contacts Fe cation. A helical transmembrane segment spans residues 274–288 (FLAAWPVVGIWFTAL). [CaMn4O5] cluster contacts are provided by H332, E333, D342, and A344. A propeptide spanning residues 345 to 359 (AAESTPVALQAPAIG) is cleaved from the precursor.

Belongs to the reaction center PufL/M/PsbA/D family. In terms of assembly, PSII is composed of 1 copy each of membrane proteins PsbA, PsbB, PsbC, PsbD, PsbE, PsbF, PsbH, PsbI, PsbJ, PsbK, PsbL, PsbM, PsbT, PsbX, PsbY, PsbZ, Psb30/Ycf12, peripheral proteins PsbO, CyanoQ (PsbQ), PsbU, PsbV and a large number of cofactors. It forms dimeric complexes. The D1/D2 heterodimer binds P680, chlorophylls that are the primary electron donor of PSII, and subsequent electron acceptors. It shares a non-heme iron and each subunit binds pheophytin, quinone, additional chlorophylls, carotenoids and lipids. D1 provides most of the ligands for the Mn4-Ca-O5 cluster of the oxygen-evolving complex (OEC). There is also a Cl(-1) ion associated with D1 and D2, which is required for oxygen evolution. The PSII complex binds additional chlorophylls, carotenoids and specific lipids. serves as cofactor. Post-translationally, tyr-161 forms a radical intermediate that is referred to as redox-active TyrZ, YZ or Y-Z. In terms of processing, C-terminally processed by CtpA; processing is essential to allow assembly of the oxygen-evolving complex and thus photosynthetic growth.

Its subcellular location is the cellular thylakoid membrane. The enzyme catalyses 2 a plastoquinone + 4 hnu + 2 H2O = 2 a plastoquinol + O2. Functionally, photosystem II (PSII) is a light-driven water:plastoquinone oxidoreductase that uses light energy to abstract electrons from H(2)O, generating O(2) and a proton gradient subsequently used for ATP formation. It consists of a core antenna complex that captures photons, and an electron transfer chain that converts photonic excitation into a charge separation. The D1/D2 (PsbA/PsbD) reaction center heterodimer binds P680, the primary electron donor of PSII as well as several subsequent electron acceptors. This Synechococcus sp. (strain WH7803) protein is Photosystem II protein D1 1.